The sequence spans 1291 residues: Period circadian protein homolog 1 (1291 aa).

The segment at 1–134 (MSGPLEGADG…SSEQSARART (134 aa)) is disordered. An interaction with BTRC region spans residues 1–151 (MSGPLEGADG…LRELKLRLPP (151 aa)). A compositionally biased stretch (low complexity) spans 48–115 (NSNGSSGNES…AYSLLSASSE (68 aa)). Residues 116-132 (QDNPSTSGCSSEQSARA) show a composition bias toward polar residues. T121 bears the Phosphothreonine; by CSNK1E mark. Phosphoserine; by CSNK1E occurs at positions 122 and 126. The Nuclear export signal 1 motif lies at 138 to 147 (LMTALRELKL). PAS domains are found at residues 208–275 (ITSE…PSRL) and 348–414 (YEAP…KILQ). A PAC domain is found at 422–465 (HSPIRFCARNGEYVTMDTSWAGFVHPWSRKVAFVLGRHKVRTAP). Residues 489-498 (LSEQIHRLLL) carry the Nuclear export signal 2 motif. Disordered regions lie at residues 508–544 (GLCG…PAPV) and 647–698 (TKRK…KEPV). Composition is skewed to low complexity over residues 513-533 (GPLM…SNGG) and 652-662 (ASSSSYTASSA). The tract at residues 596 to 815 (ELEVAPVPDQ…GLDTSSVAPS (220 aa)) is required for phosphorylation by CSNK1E. Residues S661, S663, and S704 each carry the phosphoserine modification. 3 disordered regions span residues 749 to 772 (GLAP…TPDA), 809 to 873 (TSSV…PPAT), and 938 to 1037 (SQAP…ALSG). The span at 751-769 (APGPAPSPAPSPTVAPDPT) shows a compositional bias: pro residues. S815 carries the post-translational modification Phosphoserine. The Nuclear localization signal motif lies at 824 to 840 (IPPGRRHHCRSKAKRSR). Positions 827 to 846 (GRRHHCRSKAKRSRHHHHQT) are enriched in basic residues. Composition is skewed to pro residues over residues 859–873 (SPVP…PPAT) and 955–965 (PSLPPPPLSPP). The segment covering 973 to 985 (FNSRCSSPLQLNL) has biased composition (polar residues). 2 positions are modified to phosphoserine: S978 and S979. Residues 981-988 (LQLNLLQL) carry the Nuclear export signal 3 motif. Positions 1042 to 1046 (LELLL) match the LXXLL motif. The span at 1051 to 1061 (RSGTGSAASGS) shows a compositional bias: low complexity. Disordered stretches follow at residues 1051 to 1099 (RSGT…YFGS) and 1207 to 1291 (SVQD…NSTS). A compositionally biased stretch (gly residues) spans 1062–1076 (LGSGLGSGSGSGSHE). Positions 1077–1094 (GGSTSASITRSSQSSHTS) are enriched in low complexity. Positions 1148–1291 (SRDAASVLKQ…ALPAEENSTS (144 aa)) are CRY binding domain. Positions 1235–1248 (GEGGGCGVGGGGGD) are enriched in gly residues. A compositionally biased stretch (polar residues) spans 1253–1267 (AQTQIGAKGSSSQDS).

In terms of assembly, homodimer. Component of the circadian core oscillator, which includes the CRY proteins, CLOCK or NPAS2, BMAL1 or BMAL2, CSNK1D and/or CSNK1E, TIMELESS, and the PER proteins. Interacts directly with TIMELESS. Interacts directly with PER2, PER3, CRY1 and CRY2. Interacts with BMAL1 and CLOCK. Interacts with GPRASP1. Interacts (phosphorylated) with BTRC and FBXW11; the interactions trigger proteasomal degradation. Interacts with NONO and SFPQ. Interacts with WDR5. Interacts with U2AF1L4 (Isoform 3). Interacts with USP2. Interacts with HNF4A. Phosphorylated on serine residues by CSNK1D, CSNK1E and probably also by CSNK1G2. Phosphorylation by CSNK1D or CSNK1E promotes nuclear location of PER proteins as well as ubiquitination and subsequent degradation. May be dephosphorylated by PP1. In terms of processing, ubiquitinated; requires phosphorylation by CSNK1E and interaction with BTRC and FBXW11. Deubiquitinated by USP2. In terms of tissue distribution, in brain, highest expression is observed in the SCN. Highly expressed in the pyramidal cell layer of the piriform cortex, the periventricular part of the caudate-putamen, many thalamic nuclei, and the granular layer of the cerebellar cortex. Weaker expression is detected in most area of the brain, including cortical and non cortical structures. Expression but no oscillations occurs in the glomerular and mitral cell layers of the olfactory bulb, the internal granular layer of the cerebellum, the cornu ammonis and dentate gyrus of the hippocampus, the cerebral and piriform cortices. Expressed in the renal cortex (at protein level). Also found in heart, brain, bladder, lumbar spinal cord, spleen, lung, liver, skeletal muscle and testis.

The protein localises to the nucleus. The protein resides in the cytoplasm. In terms of biological role, transcriptional repressor which forms a core component of the circadian clock. The circadian clock, an internal time-keeping system, regulates various physiological processes through the generation of approximately 24 hour circadian rhythms in gene expression, which are translated into rhythms in metabolism and behavior. It is derived from the Latin roots 'circa' (about) and 'diem' (day) and acts as an important regulator of a wide array of physiological functions including metabolism, sleep, body temperature, blood pressure, endocrine, immune, cardiovascular, and renal function. Consists of two major components: the central clock, residing in the suprachiasmatic nucleus (SCN) of the brain, and the peripheral clocks that are present in nearly every tissue and organ system. Both the central and peripheral clocks can be reset by environmental cues, also known as Zeitgebers (German for 'timegivers'). The predominant Zeitgeber for the central clock is light, which is sensed by retina and signals directly to the SCN. The central clock entrains the peripheral clocks through neuronal and hormonal signals, body temperature and feeding-related cues, aligning all clocks with the external light/dark cycle. Circadian rhythms allow an organism to achieve temporal homeostasis with its environment at the molecular level by regulating gene expression to create a peak of protein expression once every 24 hours to control when a particular physiological process is most active with respect to the solar day. Transcription and translation of core clock components (CLOCK, NPAS2, BMAL1, BMAL2, PER1, PER2, PER3, CRY1 and CRY2) plays a critical role in rhythm generation, whereas delays imposed by post-translational modifications (PTMs) are important for determining the period (tau) of the rhythms (tau refers to the period of a rhythm and is the length, in time, of one complete cycle). A diurnal rhythm is synchronized with the day/night cycle, while the ultradian and infradian rhythms have a period shorter and longer than 24 hours, respectively. Disruptions in the circadian rhythms contribute to the pathology of cardiovascular diseases, cancer, metabolic syndromes and aging. A transcription/translation feedback loop (TTFL) forms the core of the molecular circadian clock mechanism. Transcription factors, CLOCK or NPAS2 and BMAL1 or BMAL2, form the positive limb of the feedback loop, act in the form of a heterodimer and activate the transcription of core clock genes and clock-controlled genes (involved in key metabolic processes), harboring E-box elements (5'-CACGTG-3') within their promoters. The core clock genes: PER1/2/3 and CRY1/2 which are transcriptional repressors form the negative limb of the feedback loop and interact with the CLOCK|NPAS2-BMAL1|BMAL2 heterodimer inhibiting its activity and thereby negatively regulating their own expression. This heterodimer also activates nuclear receptors NR1D1/2 and RORA/B/G, which form a second feedback loop and which activate and repress BMAL1 transcription, respectively. Regulates circadian target genes expression at post-transcriptional levels, but may not be required for the repression at transcriptional level. Controls PER2 protein decay. Represses CRY2 preventing its repression on CLOCK/BMAL1 target genes such as FXYD5 and SCNN1A in kidney and PPARA in liver. Besides its involvement in the maintenance of the circadian clock, has an important function in the regulation of several processes. Participates in the repression of glucocorticoid receptor NR3C1/GR-induced transcriptional activity by reducing the association of NR3C1/GR to glucocorticoid response elements (GREs) by BMAL1:CLOCK. Plays a role in the modulation of the neuroinflammatory state via the regulation of inflammatory mediators release, such as CCL2 and IL6. In spinal astrocytes, negatively regulates the MAPK14/p38 and MAPK8/JNK MAPK cascades as well as the subsequent activation of NFkappaB. Coordinately regulates the expression of multiple genes that are involved in the regulation of renal sodium reabsorption. Can act as gene expression activator in a gene and tissue specific manner, in kidney enhances WNK1 and SLC12A3 expression in collaboration with CLOCK. Modulates hair follicle cycling. Represses the CLOCK-BMAL1 induced transcription of BHLHE40/DEC1. The protein is Period circadian protein homolog 1 (Per1) of Mus musculus (Mouse).